The following is a 423-amino-acid chain: Serine--tRNA ligase (423 aa).

229 to 231 provides a ligand contact to L-serine; the sequence is TAE. Residue 260–262 participates in ATP binding; sequence RKE. Glu283 is a binding site for L-serine. ATP is bound at residue 347 to 350; that stretch reads EISS. Position 383 (Ser383) interacts with L-serine.

It belongs to the class-II aminoacyl-tRNA synthetase family. Type-1 seryl-tRNA synthetase subfamily. Homodimer. The tRNA molecule binds across the dimer.

The protein localises to the cytoplasm. The enzyme catalyses tRNA(Ser) + L-serine + ATP = L-seryl-tRNA(Ser) + AMP + diphosphate + H(+). The catalysed reaction is tRNA(Sec) + L-serine + ATP = L-seryl-tRNA(Sec) + AMP + diphosphate + H(+). Its pathway is aminoacyl-tRNA biosynthesis; selenocysteinyl-tRNA(Sec) biosynthesis; L-seryl-tRNA(Sec) from L-serine and tRNA(Sec): step 1/1. Its function is as follows. Catalyzes the attachment of serine to tRNA(Ser). Is also able to aminoacylate tRNA(Sec) with serine, to form the misacylated tRNA L-seryl-tRNA(Sec), which will be further converted into selenocysteinyl-tRNA(Sec). This Syntrophotalea carbinolica (strain DSM 2380 / NBRC 103641 / GraBd1) (Pelobacter carbinolicus) protein is Serine--tRNA ligase.